The sequence spans 201 residues: Large ribosomal subunit protein bL25 (201 aa).

The interval 181-201 (APRESEEEAEEEATETAKESE) is disordered. Over residues 185–194 (SEEEAEEEAT) the composition is skewed to acidic residues.

The protein belongs to the bacterial ribosomal protein bL25 family. CTC subfamily. In terms of assembly, part of the 50S ribosomal subunit; part of the 5S rRNA/L5/L18/L25 subcomplex. Contacts the 5S rRNA. Binds to the 5S rRNA independently of L5 and L18.

Functionally, this is one of the proteins that binds to the 5S RNA in the ribosome where it forms part of the central protuberance. This Thermoanaerobacter pseudethanolicus (strain ATCC 33223 / 39E) (Clostridium thermohydrosulfuricum) protein is Large ribosomal subunit protein bL25.